The following is a 429-amino-acid chain: Transcriptional coactivator AacuS (429 aa).

One can recognise an HTH iclR-type domain in the interval 80 to 144; the sequence is MASQTQLLAC…GFLQEPELGH (65 aa). Residues 110–129 constitute a DNA-binding region (H-T-H motif); the sequence is IKDVAELIGVPENHICRIVR.

Its subcellular location is the nucleus. Functionally, transcriptional coactivator; part of the gene cluster that mediates the biosynthesis of the tetrahydroxanthone dimer secalonic acid D. This is Transcriptional coactivator AacuS from Aspergillus aculeatus (strain ATCC 16872 / CBS 172.66 / WB 5094).